The following is a 420-amino-acid chain: 4-hydroxy-3-methylbut-2-en-1-yl diphosphate synthase (flavodoxin) (420 aa).

[4Fe-4S] cluster contacts are provided by C307, C310, C353, and E360.

Belongs to the IspG family. [4Fe-4S] cluster serves as cofactor.

It catalyses the reaction (2E)-4-hydroxy-3-methylbut-2-enyl diphosphate + oxidized [flavodoxin] + H2O + 2 H(+) = 2-C-methyl-D-erythritol 2,4-cyclic diphosphate + reduced [flavodoxin]. It functions in the pathway isoprenoid biosynthesis; isopentenyl diphosphate biosynthesis via DXP pathway; isopentenyl diphosphate from 1-deoxy-D-xylulose 5-phosphate: step 5/6. Converts 2C-methyl-D-erythritol 2,4-cyclodiphosphate (ME-2,4cPP) into 1-hydroxy-2-methyl-2-(E)-butenyl 4-diphosphate. This is 4-hydroxy-3-methylbut-2-en-1-yl diphosphate synthase (flavodoxin) from Brucella suis (strain ATCC 23445 / NCTC 10510).